The primary structure comprises 430 residues: MSVLIRGVRPYGEGERVDVLVDDGQIAQIGPDLAIPDTADVIDATGHVLLPGFVDLHTHLREPGREYAEDIETGSAAAALGGYTAVFAMANTNPVADSPVVTDHVWHRGQQVGLVDVHPVGAVTVGLAGAELTEMGMMNAGAAQVRMFSDDGVCVHDPLIMRRALEYATGLGVLIAQHAEEPRLTVGAFAHEGPMAARLGLAGWPRAAEESIVARDALLARDAGARVHICHASAAGTVEILKWAKDQGISITAEVTPHHLLLDDARLASYDGVNRVNPPLREASDAVALRQALADGIIDCVATDHAPHAEHEKCVEFAAARPGMLGLQTALSVVVQTMVAPGLLSWRDIARVMSENPACIARLPDQGRPLEVGEPANLTVVDPDATWTVTGADLASRSANTPFESMSLPATVTATLLRGKVTARDGKIRA.

Positions 57 and 59 each coordinate Zn(2+). Substrate contacts are provided by residues 59–61 (HLR) and Asn91. 3 residues coordinate Zn(2+): Asp151, His178, and His231. Asn277 is a binding site for substrate. Residue Asp304 participates in Zn(2+) binding. The active site involves Asp304. Substrate-binding positions include His308 and 322-323 (PG).

Belongs to the metallo-dependent hydrolases superfamily. DHOase family. Class I DHOase subfamily. Zn(2+) serves as cofactor.

The enzyme catalyses (S)-dihydroorotate + H2O = N-carbamoyl-L-aspartate + H(+). Its pathway is pyrimidine metabolism; UMP biosynthesis via de novo pathway; (S)-dihydroorotate from bicarbonate: step 3/3. Catalyzes the reversible cyclization of carbamoyl aspartate to dihydroorotate. This chain is Dihydroorotase, found in Mycobacterium bovis (strain ATCC BAA-935 / AF2122/97).